A 503-amino-acid chain; its full sequence is Probable cytosol aminopeptidase (503 aa).

Residues Lys270 and Asp275 each coordinate Mn(2+). Residue Lys282 is part of the active site. The Mn(2+) site is built by Asp293, Asp352, and Glu354. The active site involves Arg356.

It belongs to the peptidase M17 family. The cofactor is Mn(2+).

It is found in the cytoplasm. It catalyses the reaction Release of an N-terminal amino acid, Xaa-|-Yaa-, in which Xaa is preferably Leu, but may be other amino acids including Pro although not Arg or Lys, and Yaa may be Pro. Amino acid amides and methyl esters are also readily hydrolyzed, but rates on arylamides are exceedingly low.. The catalysed reaction is Release of an N-terminal amino acid, preferentially leucine, but not glutamic or aspartic acids.. In terms of biological role, presumably involved in the processing and regular turnover of intracellular proteins. Catalyzes the removal of unsubstituted N-terminal amino acids from various peptides. The chain is Probable cytosol aminopeptidase from Salmonella agona (strain SL483).